Reading from the N-terminus, the 471-residue chain is MKSAVENLSPTRVKLDVEVPFEELQPSIAEAYKTIAEQVQIPGFRKGKFPNRLIDQRVGRGYVLETAINEGLNGWYQNAVAETGLRPLSRPEVEITEVPDPAATDGELKFKVEVDVRPEVELPDYAGITVEVAPAEQSDEDRQKALDDLRGRFGTLKPADRPAAKDDFITIDINAKIADEDVDSATGLSYQVGAGTMLEGLDEAVEGLSTDEEAIFDTKLVGGEHAGEAAQVTVKLTAVKVRELPEADDDFAQLASEFDTIAELREDLVKQVNQSKTVEQGVEARDKVMEKLVELIEVPIPESVIEEQLEQHFDPANAHGEEDHDTEEHRVEVRENTERAFKNEIILDAVADKEEISVSQAELIDYIVNSASQYGMDPNQFAQMLDQSGQVPMVVSEVRRRKALAHVLGLATVTDTEGAAVDLSDFVKPAVDPELEAALNEAAGVTGEDDDTEAEEERVTVSADDPGAARF.

One can recognise a PPIase FKBP-type domain in the interval 166 to 245 (DDFITIDINA…LTAVKVRELP (80 aa)). The tract at residues 442–471 (AAGVTGEDDDTEAEEERVTVSADDPGAARF) is disordered. Positions 447 to 456 (GEDDDTEAEE) are enriched in acidic residues.

The protein belongs to the FKBP-type PPIase family. Tig subfamily.

Its subcellular location is the cytoplasm. The enzyme catalyses [protein]-peptidylproline (omega=180) = [protein]-peptidylproline (omega=0). Involved in protein export. Acts as a chaperone by maintaining the newly synthesized protein in an open conformation. Functions as a peptidyl-prolyl cis-trans isomerase. In Renibacterium salmoninarum (strain ATCC 33209 / DSM 20767 / JCM 11484 / NBRC 15589 / NCIMB 2235), this protein is Trigger factor.